Consider the following 156-residue polypeptide: Small ribosomal subunit protein uS7 (156 aa).

This sequence belongs to the universal ribosomal protein uS7 family. In terms of assembly, part of the 30S ribosomal subunit. Contacts proteins S9 and S11.

Its function is as follows. One of the primary rRNA binding proteins, it binds directly to 16S rRNA where it nucleates assembly of the head domain of the 30S subunit. Is located at the subunit interface close to the decoding center, probably blocks exit of the E-site tRNA. In Mycobacterium ulcerans (strain Agy99), this protein is Small ribosomal subunit protein uS7.